Here is a 116-residue protein sequence, read N- to C-terminus: Large ribosomal subunit protein bL19 (116 aa).

This sequence belongs to the bacterial ribosomal protein bL19 family.

This protein is located at the 30S-50S ribosomal subunit interface and may play a role in the structure and function of the aminoacyl-tRNA binding site. The polypeptide is Large ribosomal subunit protein bL19 (Actinobacillus succinogenes (strain ATCC 55618 / DSM 22257 / CCUG 43843 / 130Z)).